The sequence spans 139 residues: ATP synthase epsilon chain (139 aa).

It belongs to the ATPase epsilon chain family. In terms of assembly, F-type ATPases have 2 components, CF(1) - the catalytic core - and CF(0) - the membrane proton channel. CF(1) has five subunits: alpha(3), beta(3), gamma(1), delta(1), epsilon(1). CF(0) has three main subunits: a, b and c.

It is found in the cell inner membrane. In terms of biological role, produces ATP from ADP in the presence of a proton gradient across the membrane. The chain is ATP synthase epsilon chain from Shigella boydii serotype 18 (strain CDC 3083-94 / BS512).